Consider the following 253-residue polypeptide: Phosphoglycerate mutase 2 (253 aa).

Residue T3 is modified to Phosphothreonine. Substrate contacts are provided by residues 10–17 (RHGESSWN), 23–24 (CG), R62, 89–92 (ERHY), K100, and 116–117 (RR). H11 (tele-phosphohistidine intermediate) is an active-site residue. Residues S14 and S15 each carry the phosphoserine modification. The Proton donor/acceptor role is filled by E89. S118 carries the post-translational modification Phosphoserine. At T121 the chain carries Phosphothreonine. Phosphotyrosine is present on residues Y132 and Y133. S135 is modified (phosphoserine). T152 carries the post-translational modification Phosphothreonine. 187–188 (GN) lines the substrate pocket.

Belongs to the phosphoglycerate mutase family. BPG-dependent PGAM subfamily. Homodimer. Interacts with ENO1.

The enzyme catalyses (2R)-2-phosphoglycerate = (2R)-3-phosphoglycerate. It catalyses the reaction (2R)-3-phospho-glyceroyl phosphate = (2R)-2,3-bisphosphoglycerate + H(+). Interconversion of 3- and 2-phosphoglycerate with 2,3-bisphosphoglycerate as the primer of the reaction. Can also catalyze the reaction of EC 5.4.2.4 (synthase), but with a reduced activity. This is Phosphoglycerate mutase 2 (Pgam2) from Rattus norvegicus (Rat).